The primary structure comprises 305 residues: Ribosomal protein L11 methyltransferase (305 aa).

Positions 149, 176, 198, and 240 each coordinate S-adenosyl-L-methionine.

Belongs to the methyltransferase superfamily. PrmA family.

The protein localises to the cytoplasm. It catalyses the reaction L-lysyl-[protein] + 3 S-adenosyl-L-methionine = N(6),N(6),N(6)-trimethyl-L-lysyl-[protein] + 3 S-adenosyl-L-homocysteine + 3 H(+). Methylates ribosomal protein L11. The protein is Ribosomal protein L11 methyltransferase of Trichlorobacter lovleyi (strain ATCC BAA-1151 / DSM 17278 / SZ) (Geobacter lovleyi).